Here is a 103-residue protein sequence, read N- to C-terminus: MKTLLLTLVVVTIVCLDLGYTRTCFITPDVKSKPCPPGQEVCYTKTWCDGFCGIRGKRVDLGCAATCPTPKKTGIDIICCSTDDCNTFPLRPRGRLSSIKDHP.

The first 21 residues, 1–21 (MKTLLLTLVVVTIVCLDLGYT), serve as a signal peptide directing secretion. Disulfide bonds link cysteine 24/cysteine 42, cysteine 35/cysteine 63, cysteine 48/cysteine 52, cysteine 67/cysteine 79, and cysteine 80/cysteine 85.

It belongs to the three-finger toxin family. Long-chain subfamily. Type II alpha-neurotoxin sub-subfamily. Expressed by the venom gland.

Its subcellular location is the secreted. Binds with high affinity to muscular (alpha-1/CHRNA1) and neuronal (alpha-7/CHRNA7) nicotinic acetylcholine receptor (nAChR) and inhibits acetylcholine from binding to the receptor, thereby impairing neuromuscular and neuronal transmission. This chain is Pseudonajatoxin b homolog, found in Pseudonaja textilis (Eastern brown snake).